A 377-amino-acid polypeptide reads, in one-letter code: Erythronate-4-phosphate dehydrogenase (377 aa).

2 residues coordinate substrate: Ser-45 and Thr-67. NAD(+)-binding positions include 127-128, Asp-147, and Thr-176; that span reads QV. The active site involves Arg-209. Asp-233 contacts NAD(+). Glu-238 is an active-site residue. Residue His-255 is the Proton donor of the active site. Gly-258 contributes to the NAD(+) binding site. Tyr-259 is a binding site for substrate.

Belongs to the D-isomer specific 2-hydroxyacid dehydrogenase family. PdxB subfamily. Homodimer.

The protein localises to the cytoplasm. It catalyses the reaction 4-phospho-D-erythronate + NAD(+) = (R)-3-hydroxy-2-oxo-4-phosphooxybutanoate + NADH + H(+). The protein operates within cofactor biosynthesis; pyridoxine 5'-phosphate biosynthesis; pyridoxine 5'-phosphate from D-erythrose 4-phosphate: step 2/5. Functionally, catalyzes the oxidation of erythronate-4-phosphate to 3-hydroxy-2-oxo-4-phosphonooxybutanoate. The protein is Erythronate-4-phosphate dehydrogenase of Vibrio vulnificus (strain CMCP6).